A 539-amino-acid polypeptide reads, in one-letter code: CTP synthase (539 aa).

Positions 1–268 (MADTKYIFVT…DETVLRKVGL (268 aa)) are amidoligase domain. Residue Ser15 participates in CTP binding. Ser15 lines the UTP pocket. Residue 16–21 (SLGKGI) coordinates ATP. Tyr56 is an L-glutamine binding site. Asp73 is a binding site for ATP. Mg(2+) is bound by residues Asp73 and Glu143. CTP contacts are provided by residues 150–152 (DIE), 189–194 (KTKPTQ), and Lys225. UTP-binding positions include 189-194 (KTKPTQ) and Lys225. The Glutamine amidotransferase type-1 domain maps to 294 to 536 (TIALVGKYVE…IREAIKTRKK (243 aa)). L-glutamine is bound at residue Gly356. Cys383 serves as the catalytic Nucleophile; for glutamine hydrolysis. L-glutamine contacts are provided by residues 384–387 (LGMQ), Glu407, and Arg464. Residues His509 and Glu511 contribute to the active site.

The protein belongs to the CTP synthase family. Homotetramer.

It catalyses the reaction UTP + L-glutamine + ATP + H2O = CTP + L-glutamate + ADP + phosphate + 2 H(+). The enzyme catalyses L-glutamine + H2O = L-glutamate + NH4(+). It carries out the reaction UTP + NH4(+) + ATP = CTP + ADP + phosphate + 2 H(+). Its pathway is pyrimidine metabolism; CTP biosynthesis via de novo pathway; CTP from UDP: step 2/2. Its activity is regulated as follows. Allosterically activated by GTP, when glutamine is the substrate; GTP has no effect on the reaction when ammonia is the substrate. The allosteric effector GTP functions by stabilizing the protein conformation that binds the tetrahedral intermediate(s) formed during glutamine hydrolysis. Inhibited by the product CTP, via allosteric rather than competitive inhibition. Catalyzes the ATP-dependent amination of UTP to CTP with either L-glutamine or ammonia as the source of nitrogen. Regulates intracellular CTP levels through interactions with the four ribonucleotide triphosphates. The chain is CTP synthase from Porphyromonas gingivalis (strain ATCC BAA-308 / W83).